A 274-amino-acid chain; its full sequence is 4-diphosphocytidyl-2-C-methyl-D-erythritol kinase (274 aa).

Residue lysine 8 is part of the active site. 92 to 102 (PSGAGLGGGSS) is an ATP binding site. Residue aspartate 134 is part of the active site.

It belongs to the GHMP kinase family. IspE subfamily.

The catalysed reaction is 4-CDP-2-C-methyl-D-erythritol + ATP = 4-CDP-2-C-methyl-D-erythritol 2-phosphate + ADP + H(+). It functions in the pathway isoprenoid biosynthesis; isopentenyl diphosphate biosynthesis via DXP pathway; isopentenyl diphosphate from 1-deoxy-D-xylulose 5-phosphate: step 3/6. In terms of biological role, catalyzes the phosphorylation of the position 2 hydroxy group of 4-diphosphocytidyl-2C-methyl-D-erythritol. The protein is 4-diphosphocytidyl-2-C-methyl-D-erythritol kinase of Porphyromonas gingivalis (strain ATCC 33277 / DSM 20709 / CIP 103683 / JCM 12257 / NCTC 11834 / 2561).